The following is a 205-amino-acid chain: MSIMAYNGGACIVMVGKNCVAIASDLRFGIQQQTISNDFPKVYRINDKCFVGISGLVTDAQTLYQKLVFRHNLYKLREERDMSPRVVSNLLTNMLYEKRFGPYFTEPLICGLEGPDNTPFISGMDLIGASVATDDFLVVGTMTPAMYGVCETLYKKDMNEDDLFETISQCMLASLDRDALSGWGAIVHVITPTQVITKKLLGRQD.

It belongs to the peptidase T1B family. The 26S proteasome consists of a 20S proteasome core and two 19S regulatory subunits. The 20S proteasome core is composed of 28 subunits that are arranged in four stacked rings, resulting in a barrel-shaped structure. The two end rings are each formed by seven alpha subunits, and the two central rings are each formed by seven beta subunits. The catalytic chamber with the active sites is on the inside of the barrel.

Its subcellular location is the cytoplasm. The protein localises to the nucleus. In terms of biological role, non-catalytic component of the proteasome, a multicatalytic proteinase complex which is characterized by its ability to cleave peptides with Arg, Phe, Tyr, Leu, and Glu adjacent to the leaving group at neutral or slightly basic pH. The proteasome has an ATP-dependent proteolytic activity. This Dictyostelium discoideum (Social amoeba) protein is Proteasome subunit beta type-3 (psmB3).